We begin with the raw amino-acid sequence, 94 residues long: MARSTKKGPFIDGHLMVKIEAMNQANDRKVVRTWSRRSTVHPDMVGHTIAVHNGKKFVPVYVTENMVGHKLGEFAPTRTFKGHAAKTESSSRAR.

The protein belongs to the universal ribosomal protein uS19 family.

Its function is as follows. Protein S19 forms a complex with S13 that binds strongly to the 16S ribosomal RNA. This is Small ribosomal subunit protein uS19 from Acidobacterium capsulatum (strain ATCC 51196 / DSM 11244 / BCRC 80197 / JCM 7670 / NBRC 15755 / NCIMB 13165 / 161).